The primary structure comprises 291 residues: MKKIEAWLSKKGLKNKRTLIVVIAFVLFIIFLFLLLNSNSEDSGNITITENAELRTGPNAAYPVIYKVEKGDHFKKIGKVGKWIEVEDTSSNEKGWIAGWHTNLDIVADNTKEKNPLQGKTIVLDPGHGGSDQGASSNTKYKSLEKDYTLKTAKELQRTLEKEGATVKMTRTDDTYVSLENRDIKGDAYLSIHNDALESSNANGMTVYWYHDNQRALADTLDATIQKKGLLSNRGSRQENYQVLRQTKVPAVLLELGYISNPTDETMIKDQLHRQILEQAIVDGLKIYFSA.

An N-terminal signal peptide occupies residues Met-1–Ser-40. Residues Glu-41–Asp-105 form the SH3b domain. Residues Gln-118–Lys-140 form a disordered region. In terms of domain architecture, MurNAc-LAA spans Ile-122–Lys-286.

Belongs to the N-acetylmuramoyl-L-alanine amidase 3 family.

It localises to the secreted. In terms of biological role, probably involved in cell-wall metabolism. This Staphylococcus aureus (strain USA300) protein is Probable cell wall amidase LytH (lytH).